The primary structure comprises 327 residues: Phenylalanine--tRNA ligase alpha subunit (327 aa).

Mg(2+) is bound at residue glutamate 252.

This sequence belongs to the class-II aminoacyl-tRNA synthetase family. Phe-tRNA synthetase alpha subunit type 1 subfamily. Tetramer of two alpha and two beta subunits. The cofactor is Mg(2+).

The protein localises to the cytoplasm. The catalysed reaction is tRNA(Phe) + L-phenylalanine + ATP = L-phenylalanyl-tRNA(Phe) + AMP + diphosphate + H(+). The chain is Phenylalanine--tRNA ligase alpha subunit from Shigella sonnei (strain Ss046).